A 933-amino-acid polypeptide reads, in one-letter code: Phosphoenolpyruvate carboxylase (933 aa).

Active-site residues include histidine 164 and lysine 595.

The protein belongs to the PEPCase type 1 family. Mg(2+) serves as cofactor.

The enzyme catalyses oxaloacetate + phosphate = phosphoenolpyruvate + hydrogencarbonate. Functionally, forms oxaloacetate, a four-carbon dicarboxylic acid source for the tricarboxylic acid cycle. The chain is Phosphoenolpyruvate carboxylase from Rhodopseudomonas palustris (strain BisB5).